We begin with the raw amino-acid sequence, 274 residues long: Imidazole glycerol phosphate synthase subunit HisF (274 aa).

Catalysis depends on residues D11 and D134.

Belongs to the HisA/HisF family. As to quaternary structure, heterodimer of HisH and HisF.

The protein localises to the cytoplasm. It carries out the reaction 5-[(5-phospho-1-deoxy-D-ribulos-1-ylimino)methylamino]-1-(5-phospho-beta-D-ribosyl)imidazole-4-carboxamide + L-glutamine = D-erythro-1-(imidazol-4-yl)glycerol 3-phosphate + 5-amino-1-(5-phospho-beta-D-ribosyl)imidazole-4-carboxamide + L-glutamate + H(+). It participates in amino-acid biosynthesis; L-histidine biosynthesis; L-histidine from 5-phospho-alpha-D-ribose 1-diphosphate: step 5/9. In terms of biological role, IGPS catalyzes the conversion of PRFAR and glutamine to IGP, AICAR and glutamate. The HisF subunit catalyzes the cyclization activity that produces IGP and AICAR from PRFAR using the ammonia provided by the HisH subunit. The polypeptide is Imidazole glycerol phosphate synthase subunit HisF (Methanosphaera stadtmanae (strain ATCC 43021 / DSM 3091 / JCM 11832 / MCB-3)).